Consider the following 198-residue polypeptide: Ribonuclease HII (198 aa).

The region spanning 5–195 (LRVAGVDEAG…VKAWLASHQG (191 aa)) is the RNase H type-2 domain. A divalent metal cation is bound by residues aspartate 11, glutamate 12, and aspartate 103.

Belongs to the RNase HII family. Mn(2+) serves as cofactor. The cofactor is Mg(2+).

The protein localises to the cytoplasm. The enzyme catalyses Endonucleolytic cleavage to 5'-phosphomonoester.. Functionally, endonuclease that specifically degrades the RNA of RNA-DNA hybrids. The sequence is that of Ribonuclease HII from Chromobacterium violaceum (strain ATCC 12472 / DSM 30191 / JCM 1249 / CCUG 213 / NBRC 12614 / NCIMB 9131 / NCTC 9757 / MK).